The following is a 497-amino-acid chain: ATP synthase subunit alpha, chloroplastic (497 aa).

Residue 170-177 (GDRQTGKT) coordinates ATP.

It belongs to the ATPase alpha/beta chains family. In terms of assembly, F-type ATPases have 2 components, CF(1) - the catalytic core - and CF(0) - the membrane proton channel. CF(1) has five subunits: alpha(3), beta(3), gamma(1), delta(1), epsilon(1). CF(0) has four main subunits: a, b, b' and c.

The protein resides in the plastid. It localises to the chloroplast thylakoid membrane. The catalysed reaction is ATP + H2O + 4 H(+)(in) = ADP + phosphate + 5 H(+)(out). In terms of biological role, produces ATP from ADP in the presence of a proton gradient across the membrane. The alpha chain is a regulatory subunit. The chain is ATP synthase subunit alpha, chloroplastic from Bigelowiella natans (Pedinomonas minutissima).